Reading from the N-terminus, the 162-residue chain is Caveolin-2 (162 aa).

Topologically, residues 1-86 (MGLETEKADV…FEISKYVMYK (86 aa)) are cytoplasmic. Residue Tyr-19 is modified to Phosphotyrosine; by SRC. Ser-20 and Ser-23 each carry phosphoserine. The residue at position 27 (Tyr-27) is a Phosphotyrosine; by SRC. Ser-36 carries the phosphoserine modification. The helical intramembrane region spans 87–107 (FLTVFLAIPLAFIAGILFATL). At 108-162 (SCLHIWILMPFVKTCLMVLPSVQTIWKSVTDVIIAPLCTSVGRCFSSVSLQLSQD) the chain is on the cytoplasmic side.

The protein belongs to the caveolin family. Monomer or homodimer. Interacts with CAV1; the interaction forms a stable heterooligomeric complex that is required for targeting to lipid rafts and for caveolae formation. Tyrosine phosphorylated forms do not form heterooligomers with the Tyr-19-phosphorylated form existing as a monomer or dimer, and the Tyr-27-form as a monomer only. Interacts (tyrosine phosphorylated form) with the SH2 domain-containing proteins, RASA1, NCK1 and SRC. Interacts (tyrosine phosphorylated form) with INSR, the interaction (Tyr-27-phosphorylated form) is increased on insulin stimulation. Interacts (Tyr-19 phosphorylated form) with MAPK1 (phosphorylated form); the interaction, promoted by insulin, leads to nuclear location and MAPK1 activation. Interacts with STAT3; the interaction is increased on insulin-induced tyrosine phosphorylation leading to STAT activation. In terms of processing, phosphorylated on serine and tyrosine residues. CAV1 promotes phosphorylation on Ser-23 which then targets the complex to the plasma membrane, lipid rafts and caveolae. Phosphorylation on Ser-36 appears to modulate mitosis in endothelial cells. Phosphorylation on both Tyr-19 and Tyr-27 is required for insulin-induced 'Ser-727' phosphorylation of STAT3 and its activation. Phosphorylation on Tyr-19 is required for insulin-induced phosphorylation of MAPK1 and DNA binding of STAT3. Tyrosine phosphorylation is induced by both EGF and insulin (By. similarity).

Its subcellular location is the nucleus. It is found in the cytoplasm. It localises to the golgi apparatus membrane. The protein localises to the cell membrane. The protein resides in the membrane. Its subcellular location is the caveola. In terms of biological role, may act as a scaffolding protein within caveolar membranes. Interacts directly with G-protein alpha subunits and can functionally regulate their activity. Acts as an accessory protein in conjunction with CAV1 in targeting to lipid rafts and driving caveolae formation. The Ser-36 phosphorylated form has a role in modulating mitosis in endothelial cells. Positive regulator of cellular mitogenesis of the MAPK signaling pathway. Required for the insulin-stimulated nuclear translocation and activation of MAPK1 and STAT3, and the subsequent regulation of cell cycle progression. The sequence is that of Caveolin-2 (CAV2) from Gorilla gorilla gorilla (Western lowland gorilla).